Consider the following 172-residue polypeptide: Bone marrow stromal antigen 2 (172 aa).

Topologically, residues 1-26 are cytoplasmic; that stretch reads MAPSFYHYLPVAMDERWEPKGWSIRR. A Glycyl lysine isopeptide (Lys-Gly) (interchain with G-Cter in ubiquitin) cross-link involves residue lysine 20. Residues 27–47 traverse the membrane as a helical; Signal-anchor for type II membrane protein segment; sequence WWLVAAILVVLIGVVLVCLIV. Residues 48–152 lie on the Extracellular side of the membrane; that stretch reads YFANAAHSEA…EISTTVQVNS (105 aa). N-linked (GlcNAc...) asparagine glycosylation is found at asparagine 70 and asparagine 97. The stretch at 103-149 forms a coiled coil; it reads LRDSLKKKVSQTQEQQARIKELENKIERLNQELENLRTQKEISTTVQ. Serine 152 carries GPI-anchor amidated serine lipidation. Residues 153 to 172 constitute a propeptide, removed in mature form; the sequence is GGSVVVSSLLVLVAVLFLHF.

In terms of assembly, parallel homodimer; disulfide-linked. May form homotetramers under reducing conditions. Isoform 1 and isoform 2 form homodimers and also heterodimers with each other. Dimerization is essential for its antiviral activity. Interacts (via cytoplasmic domain) with ARHGAP44. Interacts with MMP14 (via C-terminal cytoplasmic tail). Interacts with LILRA4/ILT7. Interacts with RNF115. Post-translationally, N-glycosylated. In terms of processing, the GPI anchor is essential for its antiviral activity. In terms of tissue distribution, ubiquitously expressed, with highest levels in brain and liver. Present in liver (at protein level).

The protein resides in the golgi apparatus. The protein localises to the trans-Golgi network. Its subcellular location is the cell membrane. It localises to the late endosome. It is found in the membrane raft. The protein resides in the cytoplasm. The protein localises to the apical cell membrane. Functionally, IFN-induced antiviral host restriction factor which efficiently blocks the release of diverse mammalian enveloped viruses by directly tethering nascent virions to the membranes of infected cells. Acts as a direct physical tether, holding virions to the cell membrane and linking virions to each other. The tethered virions can be internalized by endocytosis and subsequently degraded or they can remain on the cell surface. In either case, their spread as cell-free virions is restricted. Its target viruses belong to diverse families, including retroviridae: human immunodeficiency virus type 1 (HIV-1), mouse mammary tumor virus (MMTV) and murine leukemia virus (MLV), filoviridae: ebola virus (EBOV), arenaviridae: lassa virus (LASV), and rhabdoviridae: vesicular stomatitis virus (VSV). Can inhibit cell surface proteolytic activity of MMP14 causing decreased activation of MMP15 which results in inhibition of cell growth and migration. Can stimulate signaling by LILRA4/ILT7 and consequently provide negative feedback to the production of IFN by plasmacytoid dendritic cells in response to viral infection. Plays a role in the organization of the subapical actin cytoskeleton in polarized epithelial cells. This Rattus norvegicus (Rat) protein is Bone marrow stromal antigen 2 (Bst2).